Reading from the N-terminus, the 949-residue chain is ATPase 1, plasma membrane-type (949 aa).

Serine 2 carries the N-acetylserine modification. Topologically, residues 2–61 (SGLEDIKNETVDLEKIPIEEVFQQLKCTREGLTTQEGEDRIVIFGPNKLEEKKESKILKF) are cytoplasmic. A helical membrane pass occupies residues 62–81 (LGFMWNPLSWVMEAAALMAI). Residues 82-93 (ALANGDNRPPDW) are Extracellular-facing. Residues 94–114 (QDFVGIICLLVINSTISFIEE) traverse the membrane as a helical segment. Topologically, residues 115 to 243 (NNAGNAAAAL…GHFQKVLTSI (129 aa)) are cytoplasmic. Residues 244–264 (GNFCICSIAIGIAIEIVVMYP) traverse the membrane as a helical segment. Residues 265-273 (IQHRKYRDG) are Extracellular-facing. A helical transmembrane segment spans residues 274-291 (IDNLLVLLIGGIPIAMPT). The Cytoplasmic portion of the chain corresponds to 292 to 643 (VLSVTMAIGS…TSRAIFQRMK (352 aa)). Aspartate 329 acts as the 4-aspartylphosphate intermediate in catalysis. Mg(2+)-binding residues include aspartate 588 and aspartate 592. A helical transmembrane segment spans residues 644 to 665 (NYTIYAVSITIRIVFGFMLIAL). Residues 666 to 670 (IWEFD) are Extracellular-facing. The helical transmembrane segment at 671–693 (FSAFMVLIIAILNDGTIMTISKD) threads the bilayer. At 694 to 709 (RVKPSPTPDSWKLKEI) the chain is on the cytoplasmic side. The chain crosses the membrane as a helical span at residues 710–730 (FATGIVLGGYQAIMSVIFFWA). The Extracellular segment spans residues 731–751 (AHKTDFFSDKFGVRSIRDNND). The helical transmembrane segment at 752–772 (ELMGAVYLQVSIISQALIFVT) threads the bilayer. Residues 773-784 (RSRSWSFVERPG) lie on the Cytoplasmic side of the membrane. The helical transmembrane segment at 785–805 (ALLMIAFVIAQLVATLIAVYA) threads the bilayer. At 806–813 (DWTFAKVK) the chain is on the extracellular side. The helical transmembrane segment at 814-834 (GIGWGWAGVIWIYSIVTYFPQ) threads the bilayer. At 835 to 949 (DILKFAIRYI…IDTAGHHYTV (115 aa)) the chain is on the cytoplasmic side. Threonine 881 is modified (phosphothreonine). 2 positions are modified to phosphoserine: serine 899 and serine 931. The interval 947 to 949 (YTV) is interaction with 14-3-3 proteins. A Phosphothreonine modification is found at threonine 948.

The protein belongs to the cation transport ATPase (P-type) (TC 3.A.3) family. Type IIIA subfamily. As to quaternary structure, binds to 14-3-3 proteins. The binding is induced by phosphorylation of Thr-948. Binding to 14-3-3 proteins activates the H(+)-ATPase. Interacts with PPI1; this interaction promotes ATPase activity. Interacts with PSY1R. Part of a functional complex containing PSKR1, BAK1, CNGC17, and AHA. Interacts with CNGC17 and PSKR1. Triggered by SAUR9 via the phosphorylation of the C-terminal autoinhibitory domain. Interacts with AHA2. Binds to CBC1 and CBC2. Post-translationally, phosphorylated, probably by PHOT1 and PHOT2, at C-terminal Thr-948 in guard cells in response to blue light to induce stomatal opening. As to expression, expressed in guard cells, mesophyll cells, leaves and roots.

The protein resides in the cell membrane. It carries out the reaction ATP + H2O + H(+)(in) = ADP + phosphate + 2 H(+)(out). Phosphorylation on Thr residues is repressed by tyrphostin 9, sphingosine, GW5074 and BML-265. By contrast, the fungal phytotoxin fusicoccin (FC) promotes phosphorylation of Thr-948 independently to BHP, thus leading to large stomatal opening. Functionally, the plasma membrane H(+) ATPase of plants and fungi generates a proton gradient that drives the active transport of nutrients by H(+)-symport. The resulting external acidification and/or internal alkinization may mediate growth responses. Forms a functional cation-translocating unit with CNGC17 that is activated by PSKR1/BAK1 and possibly other BAK1/RLK complexes. Promotes stomatal opening in response to blue light. The polypeptide is ATPase 1, plasma membrane-type (Arabidopsis thaliana (Mouse-ear cress)).